The primary structure comprises 111 residues: MEAKAKLSMIRISPRKMRLVADTIRNKAVLVAVATLKNLNKDAAEPILKLLNSAVANAVNNNGMEADKLYVKTIFVNEGPTLKRFRPRAHGRAYEIFKRTSHVVIVVSDEK.

It belongs to the universal ribosomal protein uL22 family. Part of the 50S ribosomal subunit.

Its function is as follows. This protein binds specifically to 23S rRNA; its binding is stimulated by other ribosomal proteins, e.g. L4, L17, and L20. It is important during the early stages of 50S assembly. It makes multiple contacts with different domains of the 23S rRNA in the assembled 50S subunit and ribosome. In terms of biological role, the globular domain of the protein is located near the polypeptide exit tunnel on the outside of the subunit, while an extended beta-hairpin is found that lines the wall of the exit tunnel in the center of the 70S ribosome. The protein is Large ribosomal subunit protein uL22 of Mycoplasma mycoides subsp. mycoides SC (strain CCUG 32753 / NCTC 10114 / PG1).